The primary structure comprises 519 residues: MFDVDTVHNFFTSWYGILLAVLIGYHVFDYIRIQIVMKKLGCVSPPVESDGFFGFKLLYTSLKHKKEGTLVNFIKERFETVGKDTFSFRIAGTPVISTKNPENIKALLATQFSDFALGTRHAQFKPLLGDGIFTLDGSGWKHSRAMLRPQFAREQVAHVKSLEPHIQMLAKHVRRAKGGAFDVQSLFFRLTVDSATEFLFGESVESLQDESIGMAKDAVDFDGKAGFAEAFNTAQVYLSIRSLAQKAYFLVNNKEFRSSNEKVHKFADYYVQKALNSSPEELEKHSQDGYIFLYELVKQTRDPHVLRDQLLNILLAGRDTTAGLLSFTFYELARNPQVWSKLKEEIYEKFGKGDDARLEDITFESLKKCEYLKALLNEVLRLYPSVPQNFRVAQKDTSLPRGGGPNRDQPIFIAKGQTVTYTVYAMHRDEQFYGKDSEVFRPERWFEPETRKLGWAFLPFNGGPRICLGQQFALTEASYVIARLAQLFPNLASHDDEYPPRKASHLTMCHQSEVKISLA.

Cys-467 provides a ligand contact to heme.

It belongs to the cytochrome P450 family. Heme is required as a cofactor.

The protein localises to the membrane. Functionally, together with an NADPH cytochrome P450 the enzyme system catalyzes the terminal hydroxylation as the first step in the assimilation of alkanes and fatty acids. The chain is Cytochrome P450 52A12 (CYP52A12) from Debaryomyces hansenii (Yeast).